Reading from the N-terminus, the 89-residue chain is Acyl carrier protein MbtL (89 aa).

A Carrier domain is found at 8–83 (NHVSAELLGI…DLQAAIAAEP (76 aa)). Ser43 is subject to O-(pantetheine 4'-phosphoryl)serine.

In terms of processing, 4'-phosphopantetheine is transferred from CoA to a specific serine of apo-ACP, leading to the activated holo-ACP form.

It is found in the cytoplasm. It participates in siderophore biosynthesis; mycobactin biosynthesis. Its function is as follows. Acyl carrier protein involved in the formation of acyl-S-ACP intermediates within the mycobactin biosynthesis process. The sequence is that of Acyl carrier protein MbtL (mbtL) from Mycolicibacterium paratuberculosis (strain ATCC BAA-968 / K-10) (Mycobacterium paratuberculosis).